Reading from the N-terminus, the 103-residue chain is Large ribosomal subunit protein uL24 (103 aa).

Belongs to the universal ribosomal protein uL24 family. As to quaternary structure, part of the 50S ribosomal subunit.

Its function is as follows. One of two assembly initiator proteins, it binds directly to the 5'-end of the 23S rRNA, where it nucleates assembly of the 50S subunit. Functionally, one of the proteins that surrounds the polypeptide exit tunnel on the outside of the subunit. This Christiangramia forsetii (strain DSM 17595 / CGMCC 1.15422 / KT0803) (Gramella forsetii) protein is Large ribosomal subunit protein uL24.